Here is a 112-residue protein sequence, read N- to C-terminus: ATP synthase epsilon chain (112 aa).

It belongs to the ATPase epsilon chain family. As to quaternary structure, F-type ATPases have 2 components, CF(1) - the catalytic core - and CF(0) - the membrane proton channel. CF(1) has five subunits: alpha(3), beta(3), gamma(1), delta(1), epsilon(1). CF(0) has three main subunits: a, b and c.

The protein resides in the cell inner membrane. In terms of biological role, produces ATP from ADP in the presence of a proton gradient across the membrane. The sequence is that of ATP synthase epsilon chain (atpC) from Rickettsia conorii (strain ATCC VR-613 / Malish 7).